We begin with the raw amino-acid sequence, 121 residues long: Basic phospholipase A2 homolog 2 (121 aa).

7 disulfides stabilise this stretch: Cys-26-Cys-115, Cys-28-Cys-44, Cys-43-Cys-95, Cys-49-Cys-121, Cys-50-Cys-88, Cys-57-Cys-81, and Cys-75-Cys-86. The tract at residues 105–117 (KKYRYHLKPLCKK) is important for membrane-damaging activities in eukaryotes and bacteria; heparin-binding.

It belongs to the phospholipase A2 family. Group II subfamily. K49 sub-subfamily. In terms of assembly, homodimer; non-covalently linked (probable alternative/compact dimer conformation in solution). Expressed by the venom gland.

It is found in the secreted. Functionally, snake venom phospholipase A2 homolog that lacks enzymatic activity. Is myotoxic and displays edema-inducing activities in mouse paw. Also displays cytotoxic activity against myotubes. A model of myotoxic mechanism has been proposed: an apo Lys49-PLA2 is activated by the entrance of a hydrophobic molecule (e.g. fatty acid) at the hydrophobic channel of the protein leading to a reorientation of a monomer. This reorientation causes a transition between 'inactive' to 'active' states, causing alignment of C-terminal and membrane-docking sites (MDoS) side-by-side and putting the membrane-disruption sites (MDiS) in the same plane, exposed to solvent and in a symmetric position for both monomers. The MDoS region stabilizes the toxin on membrane by the interaction of charged residues with phospholipid head groups. Subsequently, the MDiS region destabilizes the membrane with penetration of hydrophobic residues. This insertion causes a disorganization of the membrane, allowing an uncontrolled influx of ions (i.e. calcium and sodium), and eventually triggering irreversible intracellular alterations and cell death. The sequence is that of Basic phospholipase A2 homolog 2 from Bothrops brazili (Brazil's lancehead).